Reading from the N-terminus, the 111-residue chain is Large ribosomal subunit protein uL24 (111 aa).

The protein belongs to the universal ribosomal protein uL24 family. As to quaternary structure, part of the 50S ribosomal subunit.

Its function is as follows. One of two assembly initiator proteins, it binds directly to the 5'-end of the 23S rRNA, where it nucleates assembly of the 50S subunit. In terms of biological role, one of the proteins that surrounds the polypeptide exit tunnel on the outside of the subunit. The chain is Large ribosomal subunit protein uL24 from Bifidobacterium animalis subsp. lactis (strain AD011).